We begin with the raw amino-acid sequence, 577 residues long: Zinc finger-containing ubiquitin peptidase 1 (577 aa).

The segment at 2–24 (LSCNICGETVNSEPDMKAHLIVH) adopts a C2H2-type 1 zinc-finger fold. The C2H2-type 2; atypical zinc-finger motif lies at 29–52 (IICPFCKLSGINYNEICFHIETVH). The segment covering 124-137 (ESRKYQKSREKKPG) has biased composition (basic and acidic residues). The segment at 124 to 145 (ESRKYQKSREKKPGLSEAQGSI) is disordered. A C2H2-type 3; atypical zinc finger spans residues 153–176 (PECPFCGKIEGCSQDMEIHVKTKH). The C2H2-type 4 zinc-finger motif lies at 192-214 (YDCPMCGLVCTNYHILQEHVDLH). The interval 225-247 (DRVQCSSDRELAHRLQQEEDRKR) is MIU. The interval 238–260 (RLQQEEDRKRKSEESRQEREEFQ) is disordered. The segment at 248–273 (KSEESRQEREEFQKLQRQYGLDNSGG) is zUBD/ZHA. Lys261 bears the N6-acetyllysine mark. Cys359 (nucleophile) is an active-site residue. The active-site Proton acceptor is His490. The active site involves Asp511.

The protein belongs to the peptidase C78 family. ZUFSP subfamily. Interacts with RPA1 and RPA2.

Its subcellular location is the cytoplasm. It is found in the nucleus. It catalyses the reaction Thiol-dependent hydrolysis of ester, thioester, amide, peptide and isopeptide bonds formed by the C-terminal Gly of ubiquitin (a 76-residue protein attached to proteins as an intracellular targeting signal).. Its function is as follows. Deubiquitinase with endodeubiquitinase activity that specifically interacts with and cleaves 'Lys-63'-linked long polyubiquitin chains. Shows only weak activity against 'Lys-11' and 'Lys-48'-linked chains. Plays an important role in genome stability pathways, functioning to prevent spontaneous DNA damage and also promote cellular survival in response to exogenous DNA damage. Modulates the ubiquitination status of replication protein A (RPA) complex proteins in response to replication stress. The sequence is that of Zinc finger-containing ubiquitin peptidase 1 from Mus musculus (Mouse).